We begin with the raw amino-acid sequence, 111 residues long: MKKIFSLVLLGIALFTFAFSSPALAADSVNGAKIFSANCASCHAGGKNLVQAQKTLKKADLEKYGMYSAEAIIAQVTNGKNAMPAFKGRLKPEQIEDVAAYVLGKADADWK.

The N-terminal stretch at 1–25 (MKKIFSLVLLGIALFTFAFSSPALA) is a signal peptide. 4 residues coordinate heme c: cysteine 39, cysteine 42, histidine 43, and methionine 83.

It belongs to the cytochrome c family. PetJ subfamily. Monomer. In terms of processing, binds 1 heme c group covalently per subunit.

It is found in the cellular thylakoid lumen. In terms of biological role, functions as an electron carrier between membrane-bound cytochrome b6-f and photosystem I in oxygenic photosynthesis. In Nostoc sp. (strain PCC 7120 / SAG 25.82 / UTEX 2576), this protein is Cytochrome c6 (petJ).